Consider the following 121-residue polypeptide: MVTKNSTRTEVKALAQNIHMSPFKARRVIDQIRGRSYEETLMILELMPYRAAFTILKLVYSAAANANNLGLNEAESFISKAEVNGGTVLKRLRPRARGRSYRIKRPTCHITIVLKDKSKNL.

Belongs to the universal ribosomal protein uL22 family. Part of the 50S ribosomal subunit.

It localises to the plastid. It is found in the chloroplast. Functionally, this protein binds specifically to 23S rRNA. The globular domain of the protein is located near the polypeptide exit tunnel on the outside of the subunit, while an extended beta-hairpin is found that lines the wall of the exit tunnel in the center of the 70S ribosome. The chain is Large ribosomal subunit protein uL22c (rpl22) from Lemna minor (Common duckweed).